Here is a 264-residue protein sequence, read N- to C-terminus: ATP synthase subunit a (264 aa).

The next 6 membrane-spanning stretches (helical) occupy residues 29–49 (TWHI…LWLF), 89–109 (VIAP…FMDM), 134–154 (DLNI…YYSI), 177–197 (IPVN…SLAL), 208–228 (LIFI…ALGV), and 235–255 (LIFH…LTIV).

The protein belongs to the ATPase A chain family. F-type ATPases have 2 components, CF(1) - the catalytic core - and CF(0) - the membrane proton channel. CF(1) has five subunits: alpha(3), beta(3), gamma(1), delta(1), epsilon(1). CF(0) has three main subunits: a(1), b(2) and c(9-12). The alpha and beta chains form an alternating ring which encloses part of the gamma chain. CF(1) is attached to CF(0) by a central stalk formed by the gamma and epsilon chains, while a peripheral stalk is formed by the delta and b chains.

Its subcellular location is the cell inner membrane. In terms of biological role, key component of the proton channel; it plays a direct role in the translocation of protons across the membrane. The protein is ATP synthase subunit a of Shewanella sediminis (strain HAW-EB3).